Here is a 447-residue protein sequence, read N- to C-terminus: GTPase Der (447 aa).

EngA-type G domains are found at residues 4–165 (KIIT…PEEE) and 180–357 (LQIV…KIWN). GTP is bound by residues 10–17 (GRPNVGKS), 57–61 (DTPGL), 119–122 (NKCE), 186–193 (GRPNAGKS), 233–237 (DTAGL), and 298–301 (NKWD). One can recognise a KH-like domain in the interval 358 to 443 (KKITTSKLNE…PIRFTYVKTK (86 aa)).

Belongs to the TRAFAC class TrmE-Era-EngA-EngB-Septin-like GTPase superfamily. EngA (Der) GTPase family. In terms of assembly, associates with the 50S ribosomal subunit.

GTPase that plays an essential role in the late steps of ribosome biogenesis. In Rickettsia felis (strain ATCC VR-1525 / URRWXCal2) (Rickettsia azadi), this protein is GTPase Der.